A 258-amino-acid chain; its full sequence is Ubiquinone/menaquinone biosynthesis C-methyltransferase UbiE (258 aa).

S-adenosyl-L-methionine contacts are provided by residues Thr81, Asp102, and 130-131 (NA).

The protein belongs to the class I-like SAM-binding methyltransferase superfamily. MenG/UbiE family.

It carries out the reaction a 2-demethylmenaquinol + S-adenosyl-L-methionine = a menaquinol + S-adenosyl-L-homocysteine + H(+). It catalyses the reaction a 2-methoxy-6-(all-trans-polyprenyl)benzene-1,4-diol + S-adenosyl-L-methionine = a 5-methoxy-2-methyl-3-(all-trans-polyprenyl)benzene-1,4-diol + S-adenosyl-L-homocysteine + H(+). It functions in the pathway quinol/quinone metabolism; menaquinone biosynthesis; menaquinol from 1,4-dihydroxy-2-naphthoate: step 2/2. Its pathway is cofactor biosynthesis; ubiquinone biosynthesis. Functionally, methyltransferase required for the conversion of demethylmenaquinol (DMKH2) to menaquinol (MKH2) and the conversion of 2-polyprenyl-6-methoxy-1,4-benzoquinol (DDMQH2) to 2-polyprenyl-3-methyl-6-methoxy-1,4-benzoquinol (DMQH2). This chain is Ubiquinone/menaquinone biosynthesis C-methyltransferase UbiE, found in Sinorhizobium fredii (strain NBRC 101917 / NGR234).